The sequence spans 337 residues: Glucokinase (337 aa).

11–16 (ADIGGT) is a binding site for ATP.

The protein belongs to the bacterial glucokinase family.

It is found in the cytoplasm. It catalyses the reaction D-glucose + ATP = D-glucose 6-phosphate + ADP + H(+). The polypeptide is Glucokinase (Xylella fastidiosa (strain M23)).